We begin with the raw amino-acid sequence, 134 residues long: ATP synthase epsilon chain (134 aa).

Belongs to the ATPase epsilon chain family. In terms of assembly, F-type ATPases have 2 components, CF(1) - the catalytic core - and CF(0) - the membrane proton channel. CF(1) has five subunits: alpha(3), beta(3), gamma(1), delta(1), epsilon(1). CF(0) has three main subunits: a, b and c.

It is found in the cell membrane. Its function is as follows. Produces ATP from ADP in the presence of a proton gradient across the membrane. In Staphylococcus saprophyticus subsp. saprophyticus (strain ATCC 15305 / DSM 20229 / NCIMB 8711 / NCTC 7292 / S-41), this protein is ATP synthase epsilon chain.